The following is a 250-amino-acid chain: Pyrroloquinoline-quinone synthase (250 aa).

Belongs to the PqqC family.

The catalysed reaction is 6-(2-amino-2-carboxyethyl)-7,8-dioxo-1,2,3,4,7,8-hexahydroquinoline-2,4-dicarboxylate + 3 O2 = pyrroloquinoline quinone + 2 H2O2 + 2 H2O + H(+). It participates in cofactor biosynthesis; pyrroloquinoline quinone biosynthesis. Functionally, ring cyclization and eight-electron oxidation of 3a-(2-amino-2-carboxyethyl)-4,5-dioxo-4,5,6,7,8,9-hexahydroquinoline-7,9-dicarboxylic-acid to PQQ. The protein is Pyrroloquinoline-quinone synthase of Xanthomonas euvesicatoria pv. vesicatoria (strain 85-10) (Xanthomonas campestris pv. vesicatoria).